Here is a 535-residue protein sequence, read N- to C-terminus: Glutamate--cysteine ligase (535 aa).

The protein belongs to the glutamate--cysteine ligase type 1 family. Type 1 subfamily.

It carries out the reaction L-cysteine + L-glutamate + ATP = gamma-L-glutamyl-L-cysteine + ADP + phosphate + H(+). The protein operates within sulfur metabolism; glutathione biosynthesis; glutathione from L-cysteine and L-glutamate: step 1/2. The protein is Glutamate--cysteine ligase of Pseudomonas syringae pv. syringae.